We begin with the raw amino-acid sequence, 199 residues long: Recombination protein RecR (199 aa).

The C4-type zinc finger occupies 58 to 73 (CKKCFNLTSEDECEIC). The Toprim domain maps to 81–175 (KLICVVSETK…KVTRIAYGLP (95 aa)).

Belongs to the RecR family.

In terms of biological role, may play a role in DNA repair. It seems to be involved in an RecBC-independent recombinational process of DNA repair. It may act with RecF and RecO. In Prochlorococcus marinus (strain AS9601), this protein is Recombination protein RecR.